The sequence spans 303 residues: Y-box-binding protein 1 (303 aa).

Residues 1-12 show a composition bias toward polar residues; the sequence is MSSEVETQQQQP. The disordered stretch occupies residues 1-28; sequence MSSEVETQQQQPDALEGKAGQEPAATVG. The CSD domain maps to 39–103; sequence GTVKWFNVRN…GEKGAEAANV (65 aa). Positions 43-48 are C5-methylcytosine binding; the sequence is WFNVRN. Residues 98–303 form a disordered region; it reads AEAANVTGPE…TPEAEQGGAE (206 aa). The span at 122 to 132 shows a compositional bias: basic residues; the sequence is HYRRYPRRRGP. 2 stretches are compositionally biased toward low complexity: residues 133-143 and 173-187; these read PRNYQQNYQNN and PPYY…RPQY. 2 stretches are compositionally biased toward basic residues: residues 220–229 and 258–270; these read FRPRFRRGPP and RRYR…RRRR. The segment covering 271–284 has biased composition (basic and acidic residues); it reads PENPKSQDGKETKA.

The protein belongs to the YBX1 family.

The protein resides in the cytoplasm. The protein localises to the nucleus. It localises to the cytoplasmic granule. It is found in the secreted. Its subcellular location is the extracellular exosome. The protein resides in the P-body. In terms of biological role, DNA- and RNA-binding protein involved in various processes, such as translational repression, RNA stabilization, mRNA splicing and transcription regulation. Binds preferentially to the 5'-[CU]CUGCG-3' RNA motif and specifically recognizes mRNA transcripts modified by C5-methylcytosine (m5C). Promotes mRNA stabilization: acts by binding to m5C-containing mRNAs and preventing mRNA decay. Plays a role in the maternal-to-zygotic transition in early embryo by binding to m5C-containing maternal mRNAs and preventing their degradation. Also promotes maternal-to-zygotic transition in oocytes and embryos by promoting translation repression; molecular mechanisms governing translation repression are unknown. Plays a key role in RNA composition of extracellular exosomes by defining the sorting of small non-coding RNAs, such as tRNAs, Y RNAs, Vault RNAs and miRNAs. Probably sorts RNAs in exosomes by recognizing and binding C5-methylcytosine (m5C)-containing RNAs. Acts as a key effector of epidermal progenitors by preventing epidermal progenitor senescence: acts by regulating the translation of a senescence-associated subset of cytokine mRNAs, possibly by binding to m5C-containing mRNAs. Also involved in pre-mRNA alternative splicing regulation: binds to splice sites in pre-mRNA and regulates splice site selection. Also able to bind DNA and regulate transcription. Binds to promoters that contain a Y-box (5'-CTGATTGGCCAA-3'). Promotes separation of DNA strands that contain mismatches or are modified by cisplatin. Has endonucleolytic activity and can introduce nicks or breaks into double-stranded DNA, suggesting a role in DNA repair. The secreted form acts as an extracellular mitogen and stimulates cell migration and proliferation. The protein is Y-box-binding protein 1 of Xenopus laevis (African clawed frog).